The sequence spans 1521 residues: Protein dispatched homolog 1 (1521 aa).

The span at 1 to 10 (MAVISGSDSV) shows a compositional bias: polar residues. The disordered stretch occupies residues 1–55 (MAVISGSDSVLLSNGSISTSTSNPSPLSPSDGDLPAQHLGPRETPRTKASPNGCL). A compositionally biased stretch (low complexity) spans 11–35 (LLSNGSISTSTSNPSPLSPSDGDLP). N-linked (GlcNAc...) asparagine glycosylation is found at Asn14 and Asn58. Residues 189–209 (VVVLGMCTLLIVVCALVGVLV) traverse the membrane as a helical segment. The N-linked (GlcNAc...) asparagine glycan is linked to Asn390. An SSD domain is found at 485-657 (GIEFGIKHSL…VTWLPAVIVL (173 aa)). A run of 3 helical transmembrane segments spans residues 499-519 (LLMD…IMCV), 524-544 (MFIT…SYFL), and 548-568 (VFNF…LVGI). Asn581 is a glycosylation site (N-linked (GlcNAc...) asparagine). A run of 8 helical transmembrane segments spans residues 603 to 623 (AALS…ANYV), 637 to 657 (GTAI…VIVL), 717 to 737 (YLWL…VCVN), 986 to 1006 (MGLS…NIII), 1008 to 1028 (LYAI…LVLL), 1038 to 1058 (VTIS…GVAY), 1081 to 1101 (IAMA…STVL), and 1109 to 1129 (FMML…QCLC). Composition is skewed to polar residues over residues 1355 to 1364 (QENLGRTSTH) and 1418 to 1428 (TKSKVSGLPNQ). The interval 1355 to 1440 (QENLGRTSTH…KEEKQVEPSL (86 aa)) is disordered. Asn1455 carries N-linked (GlcNAc...) asparagine glycosylation.

The protein belongs to the dispatched family. As to quaternary structure, interacts with SHH; via the cholesterol anchor of the dually lipid-modified SHH (ShhNp).

The protein resides in the membrane. Functions in hedgehog (Hh) signaling. Regulates the release and extracellular accumulation of cholesterol-modified hedgehog proteins and is hence required for effective production of the Hh signal. Synergizes with SCUBE2 to cause an increase in SHH secretion. The sequence is that of Protein dispatched homolog 1 (Disp1) from Mus musculus (Mouse).